Consider the following 114-residue polypeptide: Transmembrane protein 14C (114 aa).

4 consecutive transmembrane segments (helical) span residues 8–28 (LVPL…GGII), 33–53 (AGSV…GLGS), 62–82 (NIWL…MRFY), and 87–107 (FMPA…LGIS).

It is found in the mitochondrion membrane. Required for normal heme biosynthesis. This Bos taurus (Bovine) protein is Transmembrane protein 14C (TMEM14C).